The following is a 430-amino-acid chain: Adenylosuccinate synthetase (430 aa).

Residues 12–18 and 40–42 contribute to the GTP site; these read GDEGKGK and GHT. Catalysis depends on Asp-13, which acts as the Proton acceptor. Residues Asp-13 and Gly-40 each coordinate Mg(2+). Residues 13 to 16, 38 to 41, Thr-128, Arg-142, Gln-223, Thr-238, and Arg-302 contribute to the IMP site; these read DEGK and NAGH. Residue His-41 is the Proton donor of the active site. Residue 298-304 participates in substrate binding; sequence VNTGRKR. Residues Arg-304, 330-332, and 412-414 each bind GTP; these read KLD and GVG.

The protein belongs to the adenylosuccinate synthetase family. In terms of assembly, homodimer. Mg(2+) serves as cofactor.

Its subcellular location is the cytoplasm. The catalysed reaction is IMP + L-aspartate + GTP = N(6)-(1,2-dicarboxyethyl)-AMP + GDP + phosphate + 2 H(+). The protein operates within purine metabolism; AMP biosynthesis via de novo pathway; AMP from IMP: step 1/2. In terms of biological role, plays an important role in the de novo pathway of purine nucleotide biosynthesis. Catalyzes the first committed step in the biosynthesis of AMP from IMP. The chain is Adenylosuccinate synthetase from Corynebacterium aurimucosum (strain ATCC 700975 / DSM 44827 / CIP 107346 / CN-1) (Corynebacterium nigricans).